The chain runs to 740 residues: Alpha-1,6-mannosylglycoprotein 6-beta-N-acetylglucosaminyltransferase A (740 aa).

Residues 1-13 (MAFFTPWKLSSQK) are Cytoplasmic-facing. Residues 14-30 (LGFFLVTFGFIWGMMLL) traverse the membrane as a helical; Signal-anchor for type II membrane protein segment. Residues 31–740 (HFTIQQRTQP…GQVALCKDCL (710 aa)) lie on the Lumenal side of the membrane. 3 N-linked (GlcNAc...) asparagine glycosylation sites follow: Asn-109, Asn-114, and Asn-117. 9 disulfides stabilise this stretch: Cys-144–Cys-182, Cys-155–Cys-195, Cys-171–Cys-337, Cys-371–Cys-625, Cys-648–Cys-723, Cys-652–Cys-725, Cys-659–Cys-712, Cys-680–Cys-701, and Cys-736–Cys-739. The tract at residues 212–740 (NSLAEIRTDF…GQVALCKDCL (529 aa)) is sufficient for catalytic activity. A glycan (N-linked (GlcNAc...) asparagine) is linked at Asn-333. 377 to 378 (DS) is a substrate binding site. 2 N-linked (GlcNAc...) asparagine glycosylation sites follow: Asn-432 and Asn-446. Residue Glu-525 coordinates UDP-N-acetyl-alpha-D-glucosamine. Lys-553 serves as a coordination point for substrate.

It belongs to the glycosyltransferase 18 family. N-glycosylated. In terms of processing, a secreted form is released from the membrane after cleavage by gamma-secretase.

It localises to the golgi apparatus membrane. Its subcellular location is the secreted. The enzyme catalyses N(4)-{beta-D-GlcNAc-(1-&gt;2)-[beta-D-GlcNAc-(1-&gt;4)]-alpha-D-Man-(1-&gt;3)-[beta-D-GlcNAc-(1-&gt;2)-alpha-D-Man-(1-&gt;6)]-beta-D-Man-(1-&gt;4)-beta-D-GlcNAc-(1-&gt;4)-beta-D-GlcNAc}-L-asparaginyl-[protein] + UDP-N-acetyl-alpha-D-glucosamine = N(4)-{beta-D-GlcNAc-(1-&gt;2)-[beta-D-GlcNAc-(1-&gt;4)]-alpha-D-Man-(1-&gt;3)-[beta-D-GlcNAc-(1-&gt;2)-[beta-D-GlcNAc-(1-&gt;6)]-alpha-D-Man-(1-&gt;6)]-beta-D-Man-(1-&gt;4)-beta-D-GlcNAc-(1-&gt;4)-beta-D-GlcNAc}-L-asparaginyl-[protein] + UDP + H(+). It functions in the pathway protein modification; protein glycosylation. Its function is as follows. Catalyzes the addition of N-acetylglucosamine (GlcNAc) in beta 1-6 linkage to the alpha-linked mannose of biantennary N-linked oligosaccharides. Catalyzes an important step in the biosynthesis of branched, complex-type N-glycans, such as those found on EGFR, TGFR (TGF-beta receptor) and CDH2. Via its role in the biosynthesis of complex N-glycans, plays an important role in the activation of cellular signaling pathways, reorganization of the actin cytoskeleton, cell-cell adhesion and cell migration. MGAT5-dependent EGFR N-glycosylation enhances the interaction between EGFR and LGALS3 and thereby prevents rapid EGFR endocytosis and prolongs EGFR signaling. Required for efficient interaction between TGFB1 and its receptor. Enhances activation of intracellular signaling pathways by several types of growth factors, including FGF2, PDGF, IGF, TGFB1 and EGF. MGAT5-dependent CDH2 N-glycosylation inhibits CDH2-mediated homotypic cell-cell adhesion and contributes to the regulation of downstream signaling pathways. Promotes cell migration. Contributes to the regulation of the inflammatory response. MGAT5-dependent TCR N-glycosylation enhances the interaction between TCR and LGALS3, limits agonist-induced TCR clustering, and thereby dampens TCR-mediated responses to antigens. Required for normal leukocyte evasation and accumulation at sites of inflammation. Inhibits attachment of monocytes to the vascular endothelium and subsequent monocyte diapedesis. Functionally, promotes proliferation of umbilical vein endothelial cells and angiogenesis, at least in part by promoting the release of the growth factor FGF2 from the extracellular matrix. In Cricetulus griseus (Chinese hamster), this protein is Alpha-1,6-mannosylglycoprotein 6-beta-N-acetylglucosaminyltransferase A (MGAT5).